We begin with the raw amino-acid sequence, 49 residues long: Large ribosomal subunit protein bL33B (49 aa).

This sequence belongs to the bacterial ribosomal protein bL33 family.

This is Large ribosomal subunit protein bL33B from Lactobacillus helveticus (strain DPC 4571).